The following is a 500-amino-acid chain: Citrate lyase alpha chain (500 aa).

Oligomer with a subunit composition of (alpha,beta,gamma)6.

It is found in the cytoplasm. It catalyses the reaction citrate = oxaloacetate + acetate. It carries out the reaction citrate + acetyl-CoA = (3S)-citryl-CoA + acetate. Functionally, represents a citrate:acetyl-ACP transferase. This chain is Citrate lyase alpha chain (citF), found in Haemophilus influenzae (strain ATCC 51907 / DSM 11121 / KW20 / Rd).